The primary structure comprises 243 residues: Derlin-1.1 (243 aa).

At 1–20 (MSSPAEYYKSLPPISKAYGT) the chain is on the cytoplasmic side. A helical transmembrane segment spans residues 21–41 (LCFFTTVLVQLQILHPLFLYL). Topologically, residues 42–55 (DYPLVFKKFEIWRL) are lumenal. A helical membrane pass occupies residues 56-76 (LTSFFFLAPFSMKFGIRLLMI). Residues 77–94 (ARYGVMLEKGAFDKRTAD) are Cytoplasmic-facing. A helical transmembrane segment spans residues 95–115 (FLWMMIFGAISLLVLSIIPLF). The Lumenal portion of the chain corresponds to 116-157 (NSFFLGIPMVSMLLYVWSRENPNAQINIYGLVQLRSFYLPWA). The chain crosses the membrane as a helical span at residues 158-178 (MLLLDVIFGSSLMPGLLGIMV). Over 179 to 243 (GHLYYFFAVL…FRGRSYRLNQ (65 aa)) the chain is Cytoplasmic. The tract at residues 219-243 (SPVRPPANGNSGSGVFRGRSYRLNQ) is disordered.

The protein belongs to the derlin family. As to expression, expressed in roots, stalks, leaves, immature ears, embryo and endosperm.

Its subcellular location is the endoplasmic reticulum membrane. Functionally, may be involved in the degradation process of specific misfolded endoplasmic reticulum (ER) luminal proteins. This is Derlin-1.1 (DER1.1) from Zea mays (Maize).